We begin with the raw amino-acid sequence, 364 residues long: Succinate--CoA ligase [ADP-forming] subunit beta (364 aa).

Residues 9-229 (KNIFKKYGIP…EFEEYKNKEK (221 aa)) form the ATP-grasp domain. Residues Lys-43, 50 to 52 (GRG), Glu-89, Leu-92, and Glu-97 contribute to the ATP site. Mg(2+)-binding residues include Asn-189 and Asp-203. Substrate contacts are provided by residues Asn-246 and 303–305 (GIT).

This sequence belongs to the succinate/malate CoA ligase beta subunit family. Heterotetramer of two alpha and two beta subunits. Mg(2+) serves as cofactor.

It carries out the reaction succinate + ATP + CoA = succinyl-CoA + ADP + phosphate. The enzyme catalyses GTP + succinate + CoA = succinyl-CoA + GDP + phosphate. Its pathway is carbohydrate metabolism; tricarboxylic acid cycle; succinate from succinyl-CoA (ligase route): step 1/1. Its function is as follows. Succinyl-CoA synthetase functions in the citric acid cycle (TCA), coupling the hydrolysis of succinyl-CoA to the synthesis of either ATP or GTP and thus represents the only step of substrate-level phosphorylation in the TCA. The beta subunit provides nucleotide specificity of the enzyme and binds the substrate succinate, while the binding sites for coenzyme A and phosphate are found in the alpha subunit. The sequence is that of Succinate--CoA ligase [ADP-forming] subunit beta from Methanocaldococcus jannaschii (strain ATCC 43067 / DSM 2661 / JAL-1 / JCM 10045 / NBRC 100440) (Methanococcus jannaschii).